The sequence spans 290 residues: Inactive tau-tubulin kinase ttbk-6 (290 aa).

A Protein kinase domain is found at 1-240 (MEDHVLKKLN…FWQVMENEKI (240 aa)). Disordered regions lie at residues 244 to 263 (SKFD…AAWE) and 268 to 290 (RYFQ…DFVL).

This sequence belongs to the protein kinase superfamily. CK1 Ser/Thr protein kinase family.

The polypeptide is Inactive tau-tubulin kinase ttbk-6 (Caenorhabditis elegans).